Reading from the N-terminus, the 707-residue chain is Drebrin (707 aa).

N-acetylalanine is present on Ala-2. The 132-residue stretch at 3–134 folds into the ADF-H domain; the sequence is GVSFSGHRLE…DAGAIGQRLS (132 aa). Ser-141 and Ser-142 each carry phosphoserine. Over residues 209–236 the composition is skewed to basic and acidic residues; the sequence is ERMEQERQEQEERERRYREREQQIEEHR. 5 disordered regions span residues 209–438, 452–497, 531–557, 582–609, and 630–707; these read ERME…VCKE, AEEP…TSVA, WPGN…AEAS, LLNF…PLAA, and LEPE…EGGD. Phosphoserine is present on Ser-241. Residues 288 to 298 show a composition bias toward basic and acidic residues; it reads DNPREFFRQQE. Residues 329 to 343 show a composition bias toward low complexity; it reads SDSGPSSSSSSSSSP. Position 342 is a phosphoserine (Ser-342). Residues 355 to 364 show a composition bias toward polar residues; sequence RTPNLSSSLP. Phosphothreonine occurs at positions 377 and 381. Residues 380 to 395 are compositionally biased toward polar residues; it reads PTRSPSDSSTASTPIT. Phosphoserine is present on residues Ser-383, Ser-385, and Ser-391. Position 392 is a phosphothreonine (Thr-392). Residues 409-420 show a composition bias toward pro residues; the sequence is QPPPPPPPPPPA. Positions 428–438 are enriched in basic and acidic residues; sequence PRLDGEEVCKE. Ser-467 is subject to Phosphoserine. At Thr-549 the chain carries Phosphothreonine. Polar residues predominate over residues 639-652; sequence NGETTQKEGTQQAS. Ser-659 carries the phosphoserine modification. A compositionally biased stretch (acidic residues) spans 695 to 707; it reads PVPEEEEGFEGGD.

As to quaternary structure, interacts with RUFY. Interacts with CXCR4; this interaction is enhanced by antigenic stimulation. Interacts (via ADF-H domain) with ZMYND8 (via N-terminus); the interaction leads to sequestering of ZMYND8 in the cytoplasm. ISGylated. Brain neurons.

The protein resides in the cytoplasm. Its subcellular location is the cell projection. The protein localises to the dendrite. It localises to the cell cortex. It is found in the cell junction. The protein resides in the growth cone. In terms of biological role, actin cytoskeleton-organizing protein that plays a role in the formation of cell projections. Required for actin polymerization at immunological synapses (IS) and for the recruitment of the chemokine receptor CXCR4 to IS. Plays a role in dendritic spine morphogenesis and organization, including the localization of the dopamine receptor DRD1 to the dendritic spines. Involved in memory-related synaptic plasticity in the hippocampus. This chain is Drebrin (Dbn1), found in Rattus norvegicus (Rat).